The following is a 137-amino-acid chain: Small ribosomal subunit protein uS12 (137 aa).

3-methylthioaspartic acid is present on D89. The interval 104–137 (TAGVNGRKQSRSKYGAKRPKPGQAAAAPAKGKKK) is disordered. Residues 111–123 (KQSRSKYGAKRPK) are compositionally biased toward basic residues. Residues 124 to 137 (PGQAAAAPAKGKKK) are compositionally biased toward low complexity.

This sequence belongs to the universal ribosomal protein uS12 family. In terms of assembly, part of the 30S ribosomal subunit. Contacts proteins S8 and S17. May interact with IF1 in the 30S initiation complex.

With S4 and S5 plays an important role in translational accuracy. Its function is as follows. Interacts with and stabilizes bases of the 16S rRNA that are involved in tRNA selection in the A site and with the mRNA backbone. Located at the interface of the 30S and 50S subunits, it traverses the body of the 30S subunit contacting proteins on the other side and probably holding the rRNA structure together. The combined cluster of proteins S8, S12 and S17 appears to hold together the shoulder and platform of the 30S subunit. The sequence is that of Small ribosomal subunit protein uS12 from Cytophaga hutchinsonii (strain ATCC 33406 / DSM 1761 / CIP 103989 / NBRC 15051 / NCIMB 9469 / D465).